Reading from the N-terminus, the 378-residue chain is Putative F-box protein At3g24580 (378 aa).

In terms of domain architecture, F-box spans 1 to 47; that stretch reads MTKMSNLPNDLAEEVLSRVSLTSLRNVRLTCKDWNTLSKGESFAKNH.

The polypeptide is Putative F-box protein At3g24580 (Arabidopsis thaliana (Mouse-ear cress)).